The chain runs to 24 residues: Conotoxin PIVF (24 aa).

3 disulfide bridges follow: C2/C10, C3/C15, and C13/C19. Residue K24 is modified to Lysine amide.

This sequence belongs to the conotoxin A superfamily. As to expression, expressed by the venom duct.

It localises to the secreted. Functionally, probable neurotoxin with ion channel inhibitor activity. In vivo, elicits dose-dependently excitatory activity upon injection into fish. Its action is slowly reversible. The protein is Conotoxin PIVF of Conus purpurascens (Purple cone).